The sequence spans 33 residues: Actin (33 aa).

The protein belongs to the actin family.

Its subcellular location is the cytoplasm. The protein resides in the cytoskeleton. The catalysed reaction is ATP + H2O = ADP + phosphate + H(+). In terms of biological role, actins are highly conserved proteins that are involved in various types of cell motility and are ubiquitously expressed in all eukaryotic cells. In Dictyocaulus viviparus (Bovine lungworm), this protein is Actin.